The primary structure comprises 425 residues: Histone-binding protein RBBP4 (425 aa).

Residue Ala-2 is modified to N-acetylalanine. At Lys-4 the chain carries N6-acetyllysine; alternate. A Glycyl lysine isopeptide (Lys-Gly) (interchain with G-Cter in SUMO2); alternate cross-link involves residue Lys-4. Residue Lys-4 forms a Glycyl lysine isopeptide (Lys-Gly) (interchain with G-Cter in ubiquitin); alternate linkage. 7 WD repeats span residues 32–125 (YDLV…NHEG), 126–175 (EVNR…RLRG), 176–223 (HQKE…KTIF), 225–270 (GHTA…HSVD), 271–314 (AHTA…HSFE), 315–371 (SHKD…FIHG), and 372–404 (GHTAKISDFSWNPNEPWVICSVSEDNIMQVWQM). Ser-110 bears the Phosphoserine mark. Lys-160 is modified (N6-acetyllysine; alternate). A Glycyl lysine isopeptide (Lys-Gly) (interchain with G-Cter in SUMO2); alternate cross-link involves residue Lys-160. Residue Ser-355 is modified to Phosphoserine.

It belongs to the WD repeat RBAP46/RBAP48/MSI1 family. In terms of assembly, binds directly to helix 1 of the histone fold of histone H4, a region that is not accessible when H4 is in chromatin. Subunit of the chromatin assembly factor 1 (CAF-1) complex, which is composed of RBBP4, CHAF1B and CHAF1A. Subunit of the core histone deacetylase (HDAC) complex, which is composed of HDAC1, HDAC2, RBBP4 and RBBP7. The core HDAC complex associates with SIN3A, ARID4B/SAP180, SAP18, SAP30, SAP130, SUDS3/SAP45 and possibly ARID4A/RBP1 and ING1 to form the SIN3 HDAC complex. Component of the nucleosome remodeling and deacetylase (NuRD) repressor complex, composed of core proteins MTA1, MTA2, MTA3, RBBP4, RBBP7, HDAC1, HDAC2, MBD2, MBD3, and peripherally associated proteins CDK2AP1, CDK2AP2, GATAD2A, GATAD2B, CHD3, CHD4 and CHD5. The exact stoichiometry of the NuRD complex is unknown, and some subunits such as MBD2 and MBD3, GATAD2A and GATAD2B, and CHD3, CHD4 and CHD5 define mutually exclusive NuRD complexes. Interacts with ZNF512B; the interaction is direct and may play a role in repressing gene expression. The NuRD complex may also interact with MBD3L1 and MBD3L2. Component of the PRC2 complex, which consists of the core subunits EED, EZH1 or EZH2, SUZ12, and RBBP4, and various combinations of accessory subunits including AEBP2, JARID2, PHF19, MTF2 and EPOP. Forms a monomeric PRC2.2 (class 2) complex consisting of at least SUZ12, RBBP4, AEBP2 and JARID2. Forms a dimeric PRC2.1 (class 1, PRC-PCL) complex consisting of at least SUZ12, RBBP4, and PHF19; PHF19 stabilizes the dimeric structure which enhances PRC2 interaction with chromatin. Component of the NURF-1 ISWI chromatin remodeling complex (also called the nucleosome-remodeling factor (NURF) complex) at least composed of SMARCA1 (isoform 2), BPTF, RBBP4 and RBBP7. Within the complex interacts with isoform 2 of SMARCA1. Component of the BPFT-SMARCA1 complex at least composed of SMARCA1 (isoform 1), BPFT, RBBP4 and RBBP7; the complex is catalytically inactive and does not remodel chromatin. Within the complex interacts with isoform 1 of SMARCA1. Interacts with the ISWI chromatin remodeling complex component SMARCA5; the interaction is direct. Interacts with the viral protein-binding domain of the retinoblastoma protein (RB1). Component of the DREAM complex (also named LINC complex) at least composed of E2F4, E2F5, LIN9, LIN37, LIN52, LIN54, MYBL1, MYBL2, RBL1, RBL2, RBBP4, TFDP1 and TFDP2. The complex exists in quiescent cells where it represses cell cycle-dependent genes. It dissociates in S phase when LIN9, LIN37, LIN52 and LIN54 form a subcomplex that binds to MYBL2. Found in a complex composed of at least SINHCAF, SIN3A, HDAC1, SAP30, RBBP4, OGT and TET1. Interacts with ZNF827; the interaction is direct and recruits RBBP4 to telomeres. Interacts with MTA1; the interaction is direct and mutually exclusive with binding histone H4. Interacts with ARMC12 (via ARM domains). Interacts with BRCA1. Interacts with CDK2AP1. Interacts with CREBBP, and this interaction may be enhanced by the binding of phosphorylated CREB1 to CREBBP. Interacts with ERCC6. Interacts with HDAC7. Interacts with PHF6. Interacts with PWWP2B. Interacts with SPEN/MINT. Interacts with SUV39H1.

The protein localises to the nucleus. It is found in the chromosome. The protein resides in the telomere. Core histone-binding subunit that may target chromatin assembly factors, chromatin remodeling factors and histone deacetylases to their histone substrates in a manner that is regulated by nucleosomal DNA. Component of the chromatin assembly factor 1 (CAF-1) complex, which is required for chromatin assembly following DNA replication and DNA repair. Component of the core histone deacetylase (HDAC) complex, which promotes histone deacetylation and consequent transcriptional repression. Component of the nucleosome remodeling and histone deacetylase complex (the NuRD complex), which promotes transcriptional repression by histone deacetylation and nucleosome remodeling. Component of the PRC2 complex, which promotes repression of homeotic genes during development. Component of the NURF (nucleosome remodeling factor) complex. The protein is Histone-binding protein RBBP4 (RBBP4) of Pongo abelii (Sumatran orangutan).